Reading from the N-terminus, the 253-residue chain is Imidazole glycerol phosphate synthase subunit HisF (253 aa).

Catalysis depends on residues aspartate 11 and aspartate 130.

This sequence belongs to the HisA/HisF family. In terms of assembly, heterodimer of HisH and HisF.

It localises to the cytoplasm. It carries out the reaction 5-[(5-phospho-1-deoxy-D-ribulos-1-ylimino)methylamino]-1-(5-phospho-beta-D-ribosyl)imidazole-4-carboxamide + L-glutamine = D-erythro-1-(imidazol-4-yl)glycerol 3-phosphate + 5-amino-1-(5-phospho-beta-D-ribosyl)imidazole-4-carboxamide + L-glutamate + H(+). It participates in amino-acid biosynthesis; L-histidine biosynthesis; L-histidine from 5-phospho-alpha-D-ribose 1-diphosphate: step 5/9. IGPS catalyzes the conversion of PRFAR and glutamine to IGP, AICAR and glutamate. The HisF subunit catalyzes the cyclization activity that produces IGP and AICAR from PRFAR using the ammonia provided by the HisH subunit. The sequence is that of Imidazole glycerol phosphate synthase subunit HisF from Clostridium botulinum (strain 657 / Type Ba4).